The primary structure comprises 150 residues: Ribonuclease K6 (150 aa).

The signal sequence occupies residues 1–23 (MVLCFPLLLLVLVLWGQVCPLHA). H38 (proton acceptor) is an active-site residue. 4 disulfide bridges follow: C46–C104, C60–C114, C78–C129, and C85–C92. A glycan (N-linked (GlcNAc...) asparagine) is linked at N55. Residues 61–65 (KPQNT) and K86 each bind substrate. N-linked (GlcNAc...) asparagine glycosylation is present at N100. R105 serves as a coordination point for substrate. H145 (proton donor) is an active-site residue.

It belongs to the pancreatic ribonuclease family. Interacts (via N-terminus) with bacterial lipopolysaccharide (LPS).

The protein localises to the secreted. The protein resides in the lysosome. Its subcellular location is the cytoplasmic granule. Its function is as follows. Ribonuclease which shows a preference for the pyrimidines uridine and cytosine. Has potent antibacterial activity against a range of Gram-positive and Gram-negative bacteria, including P.aeruginosa, A.baumanii, M.luteus, S.aureus, E.faecalis, E.faecium, S.saprophyticus and E.coli. Causes loss of bacterial membrane integrity, and also promotes agglutination of Gram-negative bacteria. Probably contributes to urinary tract sterility. Bactericidal activity is independent of RNase activity. The sequence is that of Ribonuclease K6 (RNASE6) from Aotus trivirgatus (Three-striped night monkey).